The sequence spans 246 residues: MSGKDRLPIFPSRGAQMLMKARLAGAQKGHGLLKKKADALQMRFRLILGKIIETKTLMGDVMKEAAFSLAEAKFTSGDINQVVLQNVTKAQIKIRTKKDNVAGVTLPVFESYQDGSDTYELAGLARGGQQLAKLKKNYQSAVKLLVELASLQTSFVTLDEVIKITNRRVNAIEHVIIPRIDRTLAYIISELDELEREEFYRLKKIQDKKREARIKADAKKAELLQQGIDVRQQANILDEGDDDVLF.

The protein belongs to the V-ATPase D subunit family. V-ATPase is a heteromultimeric enzyme made up of two complexes: the ATP-hydrolytic V1 complex and the proton translocation V0 complex. The V1 complex consists of three catalytic AB heterodimers that form a heterohexamer, three peripheral stalks each consisting of EG heterodimers, one central rotor including subunits D and F, and the regulatory subunits C and H. The proton translocation complex V0 consists of the proton transport subunit a, a ring of proteolipid subunits c9c'', rotary subunit d, subunits e and f, and the accessory subunits VhaAC45 and ATP6AP2.

Its function is as follows. Subunit of the V1 complex of vacuolar(H+)-ATPase (V-ATPase), a multisubunit enzyme composed of a peripheral complex (V1) that hydrolyzes ATP and a membrane integral complex (V0) that translocates protons. V-ATPase is responsible for acidifying and maintaining the pH of intracellular compartments and in some cell types, is targeted to the plasma membrane, where it is responsible for acidifying the extracellular environment. The protein is V-type proton ATPase subunit D 1 (Vha36-1) of Drosophila melanogaster (Fruit fly).